Reading from the N-terminus, the 274-residue chain is Undecaprenyl-diphosphatase (274 aa).

6 helical membrane passes run 44-64 (AKVF…LVYW), 85-105 (LNVL…GKAI), 109-129 (LFTP…ILWA), 185-205 (ATDY…VYSL), 215-235 (ADIP…WLCV), and 250-270 (FAWY…SGLV).

The protein belongs to the UppP family.

The protein localises to the cell inner membrane. The enzyme catalyses di-trans,octa-cis-undecaprenyl diphosphate + H2O = di-trans,octa-cis-undecaprenyl phosphate + phosphate + H(+). In terms of biological role, catalyzes the dephosphorylation of undecaprenyl diphosphate (UPP). Confers resistance to bacitracin. In Acidovorax ebreus (strain TPSY) (Diaphorobacter sp. (strain TPSY)), this protein is Undecaprenyl-diphosphatase.